We begin with the raw amino-acid sequence, 250 residues long: tRNA (guanine-N(1)-)-methyltransferase (250 aa).

S-adenosyl-L-methionine-binding positions include Gly116 and 136–141 (IGDYVL).

The protein belongs to the RNA methyltransferase TrmD family. Homodimer.

It is found in the cytoplasm. It catalyses the reaction guanosine(37) in tRNA + S-adenosyl-L-methionine = N(1)-methylguanosine(37) in tRNA + S-adenosyl-L-homocysteine + H(+). Functionally, specifically methylates guanosine-37 in various tRNAs. In Pseudomonas putida (strain ATCC 47054 / DSM 6125 / CFBP 8728 / NCIMB 11950 / KT2440), this protein is tRNA (guanine-N(1)-)-methyltransferase.